The chain runs to 172 residues: Adenine phosphoribosyltransferase (172 aa).

The protein belongs to the purine/pyrimidine phosphoribosyltransferase family. In terms of assembly, homodimer.

It is found in the cytoplasm. The enzyme catalyses AMP + diphosphate = 5-phospho-alpha-D-ribose 1-diphosphate + adenine. It participates in purine metabolism; AMP biosynthesis via salvage pathway; AMP from adenine: step 1/1. Its function is as follows. Catalyzes a salvage reaction resulting in the formation of AMP, that is energically less costly than de novo synthesis. The protein is Adenine phosphoribosyltransferase of Methanococcus maripaludis (strain C7 / ATCC BAA-1331).